The primary structure comprises 356 residues: Sulfate/thiosulfate import ATP-binding protein CysA (356 aa).

Positions 3–237 (IEVKNLVKRF…PKNSFVFHFL (235 aa)) constitute an ABC transporter domain. 35–42 (GPSGSGKT) contacts ATP.

This sequence belongs to the ABC transporter superfamily. Sulfate/tungstate importer (TC 3.A.1.6) family. In terms of assembly, the complex is composed of two ATP-binding proteins (CysA), two transmembrane proteins (CysT and CysW) and a solute-binding protein (CysP).

The protein localises to the cell inner membrane. It carries out the reaction sulfate(out) + ATP + H2O = sulfate(in) + ADP + phosphate + H(+). The enzyme catalyses thiosulfate(out) + ATP + H2O = thiosulfate(in) + ADP + phosphate + H(+). In terms of biological role, part of the ABC transporter complex CysAWTP involved in sulfate/thiosulfate import. Responsible for energy coupling to the transport system. In Leptospira interrogans serogroup Icterohaemorrhagiae serovar copenhageni (strain Fiocruz L1-130), this protein is Sulfate/thiosulfate import ATP-binding protein CysA.